The primary structure comprises 657 residues: DNA mismatch repair protein MutL (657 aa).

Belongs to the DNA mismatch repair MutL/HexB family.

In terms of biological role, this protein is involved in the repair of mismatches in DNA. It is required for dam-dependent methyl-directed DNA mismatch repair. May act as a 'molecular matchmaker', a protein that promotes the formation of a stable complex between two or more DNA-binding proteins in an ATP-dependent manner without itself being part of a final effector complex. This chain is DNA mismatch repair protein MutL, found in Streptococcus agalactiae serotype Ia (strain ATCC 27591 / A909 / CDC SS700).